We begin with the raw amino-acid sequence, 494 residues long: Trigger factor (494 aa).

The PPIase FKBP-type domain occupies 169–254; it reads GDRITMDYVG…VKEVAAPADV (86 aa). The interval 441-494 is disordered; it reads LAEEEGEAKAETKKAAPKKKAAAKAEAADAGEGEEAAPKKKAAPKKKAADESAE.

It belongs to the FKBP-type PPIase family. Tig subfamily.

It is found in the cytoplasm. The catalysed reaction is [protein]-peptidylproline (omega=180) = [protein]-peptidylproline (omega=0). Involved in protein export. Acts as a chaperone by maintaining the newly synthesized protein in an open conformation. Functions as a peptidyl-prolyl cis-trans isomerase. This chain is Trigger factor, found in Rhizobium johnstonii (strain DSM 114642 / LMG 32736 / 3841) (Rhizobium leguminosarum bv. viciae).